Consider the following 958-residue polypeptide: Glycine dehydrogenase (decarboxylating) (958 aa).

K705 bears the N6-(pyridoxal phosphate)lysine mark.

It belongs to the GcvP family. As to quaternary structure, the glycine cleavage system is composed of four proteins: P, T, L and H. The cofactor is pyridoxal 5'-phosphate.

The enzyme catalyses N(6)-[(R)-lipoyl]-L-lysyl-[glycine-cleavage complex H protein] + glycine + H(+) = N(6)-[(R)-S(8)-aminomethyldihydrolipoyl]-L-lysyl-[glycine-cleavage complex H protein] + CO2. The glycine cleavage system catalyzes the degradation of glycine. The P protein binds the alpha-amino group of glycine through its pyridoxal phosphate cofactor; CO(2) is released and the remaining methylamine moiety is then transferred to the lipoamide cofactor of the H protein. This chain is Glycine dehydrogenase (decarboxylating), found in Synechococcus sp. (strain CC9902).